The following is a 287-amino-acid chain: Bifunctional protein FolD (287 aa).

NADP(+) is bound by residues Gly167–Ser169 and Thr192.

The protein belongs to the tetrahydrofolate dehydrogenase/cyclohydrolase family. As to quaternary structure, homodimer.

It catalyses the reaction (6R)-5,10-methylene-5,6,7,8-tetrahydrofolate + NADP(+) = (6R)-5,10-methenyltetrahydrofolate + NADPH. The catalysed reaction is (6R)-5,10-methenyltetrahydrofolate + H2O = (6R)-10-formyltetrahydrofolate + H(+). Its pathway is one-carbon metabolism; tetrahydrofolate interconversion. In terms of biological role, catalyzes the oxidation of 5,10-methylenetetrahydrofolate to 5,10-methenyltetrahydrofolate and then the hydrolysis of 5,10-methenyltetrahydrofolate to 10-formyltetrahydrofolate. This is Bifunctional protein FolD from Sorangium cellulosum (strain So ce56) (Polyangium cellulosum (strain So ce56)).